The primary structure comprises 528 residues: Chaperonin GroEL, chloroplastic (528 aa).

ATP-binding positions include 29 to 32 (TLGP), 86 to 90 (DGTTT), glycine 414, and aspartate 496.

It belongs to the chaperonin (HSP60) family. As to quaternary structure, forms a cylinder of 14 subunits composed of two heptameric rings stacked back-to-back. Interacts with the co-chaperonin GroES.

The protein resides in the plastid. The protein localises to the chloroplast. It carries out the reaction ATP + H2O + a folded polypeptide = ADP + phosphate + an unfolded polypeptide.. Functionally, together with its co-chaperonin GroES, plays an essential role in assisting protein folding. The GroEL-GroES system forms a nano-cage that allows encapsulation of the non-native substrate proteins and provides a physical environment optimized to promote and accelerate protein folding. The protein is Chaperonin GroEL, chloroplastic of Gracilaria tenuistipitata var. liui (Red alga).